A 65-amino-acid chain; its full sequence is Large ribosomal subunit protein bL35 (65 aa).

The segment covering 1–15 has biased composition (basic residues); it reads MPKMKTKKSASKRFQ. Residues 1–27 form a disordered region; the sequence is MPKMKTKKSASKRFQVRGSGSIKRGQA.

This sequence belongs to the bacterial ribosomal protein bL35 family.

This chain is Large ribosomal subunit protein bL35, found in Bordetella petrii (strain ATCC BAA-461 / DSM 12804 / CCUG 43448).